Reading from the N-terminus, the 497-residue chain is Aspartyl/glutamyl-tRNA(Asn/Gln) amidotransferase subunit B (497 aa).

Belongs to the GatB/GatE family. GatB subfamily. Heterotrimer of A, B and C subunits.

It carries out the reaction L-glutamyl-tRNA(Gln) + L-glutamine + ATP + H2O = L-glutaminyl-tRNA(Gln) + L-glutamate + ADP + phosphate + H(+). It catalyses the reaction L-aspartyl-tRNA(Asn) + L-glutamine + ATP + H2O = L-asparaginyl-tRNA(Asn) + L-glutamate + ADP + phosphate + 2 H(+). Its function is as follows. Allows the formation of correctly charged Asn-tRNA(Asn) or Gln-tRNA(Gln) through the transamidation of misacylated Asp-tRNA(Asn) or Glu-tRNA(Gln) in organisms which lack either or both of asparaginyl-tRNA or glutaminyl-tRNA synthetases. The reaction takes place in the presence of glutamine and ATP through an activated phospho-Asp-tRNA(Asn) or phospho-Glu-tRNA(Gln). The polypeptide is Aspartyl/glutamyl-tRNA(Asn/Gln) amidotransferase subunit B (Novosphingobium aromaticivorans (strain ATCC 700278 / DSM 12444 / CCUG 56034 / CIP 105152 / NBRC 16084 / F199)).